The primary structure comprises 311 residues: Olfactory receptor 8B8 (311 aa).

At 1 to 25 (MAAENSSFVTQFILAGLTDQPGVQI) the chain is on the extracellular side. The N-linked (GlcNAc...) asparagine glycan is linked to Asn-5. A helical transmembrane segment spans residues 26-46 (PLFFLFLGFYVVTVVGNLGLI). Over 47-54 (TLIRLNSH) the chain is Cytoplasmic. Residues 55–75 (LHTPMYFFLYNLSFIDFCYSS) traverse the membrane as a helical segment. Over 76–99 (VITPKMLMSFVLKKNSISYAGCMT) the chain is Extracellular. A disulfide bridge connects residues Cys-97 and Cys-189. Residues 100–120 (QLFFFLFFVVSESFILSAMAY) form a helical membrane-spanning segment. Topologically, residues 121-139 (DRYVAICNPLLYMVTMSPQ) are cytoplasmic. A helical transmembrane segment spans residues 140–160 (VCFLLLLGVYGMGFAGAMAHT). At 161-197 (ACMMGVTFCANNLVNHYMCDILPLLECACTSTYVNEL) the chain is on the extracellular side. A helical membrane pass occupies residues 198–217 (VVFVVVGIDIGVPTVTIFIS). Residues 218–237 (YALILSSIFHIDSTEGRSKA) lie on the Cytoplasmic side of the membrane. Residues 238–258 (FSTCSSHIIAVSLFFGSGAFM) traverse the membrane as a helical segment. Over 259 to 271 (YLKPFSLLAMNQG) the chain is Extracellular. A helical transmembrane segment spans residues 272-292 (KVSSLFYTTVVPMLNPLIYSL). The Cytoplasmic portion of the chain corresponds to 293–311 (RNKDVKVALKKILNKNAFS).

The protein belongs to the G-protein coupled receptor 1 family. As to expression, expressed in the tongue and testis.

It localises to the cell membrane. In terms of biological role, odorant receptor (Potential). May be involved in taste perception. In Homo sapiens (Human), this protein is Olfactory receptor 8B8.